The sequence spans 830 residues: Cyclin-dependent kinase inhibitor FAR1 (830 aa).

The disordered stretch occupies residues 1–31 (MKTPTRVSFEKKIHTPPSGDRDAERSPPKKF). The span at 8 to 27 (SFEKKIHTPPSGDRDAERSP) shows a compositional bias: basic and acidic residues. Residue Ser87 is modified to Phosphoserine; by CDC28. Phosphoserine occurs at positions 110 and 114. An RING-type zinc finger spans residues 202-252 (CLICEESISSTFTGEKVVESTCSHTSHYNCYLMLFETLYFQGKFPECKICG). The residue at position 306 (Thr306) is a Phosphothreonine.

In terms of assembly, associates with the CDC28-CLN complex. In terms of processing, thought to be phosphorylated by MAP kinase FUS3. Thought to enhance the binding of FAR1 to G1-specific cyclin-dependent kinase (CDK) complexes.

Inhibitor of the cyclin-dependent kinase CDC28. Necessary for cell cycle arrest. Involved in pheromone response. Contributes to mating efficiency. Required for oriented polarization of yeast cells in response to mating pheromones. The protein is Cyclin-dependent kinase inhibitor FAR1 (FAR1) of Saccharomyces cerevisiae (strain ATCC 204508 / S288c) (Baker's yeast).